A 378-amino-acid polypeptide reads, in one-letter code: MNKPLRNSHPLFKIANNALVDLPAPINISSWWNFGSLLGLCLIIQILTGLFLAMHYTADINLAFYSVNHICRDVNYGWLLRTLHANGASFFFICIYLHVGRGIYYGSYKFTPTWLIGVIILFLVMGTAFMGYVLPWGQMSFWGATVITNLLSAIPYLGMDLVQWLWGGFAVDNATLTRFFTFHFILPFIVLAMTMIHLLFLHQTGSNNPIGLNSNIDKIPFHPYFTFKDIVGFIVMIFILISLVLISPNLLGDPDNFIPANPLVTPAHIQPEWYFLFAYAILRSIPNKLGGVIALVLSIAILMILPFYNLSKFRGIQFYPINQVMFWSMLVTVILLTWIGARPVEEPYVLIGQILTVVYFLYYLVNPLITKWWDNLLN.

The next 4 helical transmembrane spans lie at 34-54 (FGSL…FLAM), 78-99 (WLLR…YLHV), 114-134 (WLIG…GYVL), and 179-199 (FFTF…IHLL). His-84 and His-98 together coordinate heme b. Residues His-183 and His-197 each contribute to the heme b site. Position 202 (His-202) interacts with a ubiquinone. 4 helical membrane passes run 227–247 (FKDI…VLIS), 289–309 (LGGV…PFYN), 321–341 (INQV…WIGA), and 348–368 (YVLI…VNPL).

It belongs to the cytochrome b family. As to quaternary structure, the main subunits of complex b-c1 are: cytochrome b, cytochrome c1 and the Rieske protein. Heme b is required as a cofactor.

The protein resides in the mitochondrion inner membrane. Component of the ubiquinol-cytochrome c reductase complex (complex III or cytochrome b-c1 complex) that is part of the mitochondrial respiratory chain. The b-c1 complex mediates electron transfer from ubiquinol to cytochrome c. Contributes to the generation of a proton gradient across the mitochondrial membrane that is then used for ATP synthesis. The chain is Cytochrome b (mt:Cyt-b) from Drosophila melanogaster (Fruit fly).